Consider the following 70-residue polypeptide: Beta-defensin 43 (70 aa).

The first 22 residues, 1–22 (MRLLLSILGVLTLLSILPLARS), serve as a signal peptide directing secretion. Intrachain disulfides connect Cys-29/Cys-57 and Cys-36/Cys-50.

This sequence belongs to the beta-defensin family.

Its subcellular location is the secreted. Its function is as follows. Has bactericidal activity. The chain is Beta-defensin 43 (Defb43) from Rattus norvegicus (Rat).